Reading from the N-terminus, the 397-residue chain is LIM/homeobox protein Lhx3 (397 aa).

LIM zinc-binding domains follow at residues 31 to 81 and 90 to 144; these read CAGC…CKDD and CAAC…CKAD. Thr63 is modified (phosphothreonine). A Phosphoserine modification is found at Ser71. The segment at residues 157-216 is a DNA-binding region (homeobox); that stretch reads AKRPRTTITAKQLETLKSAYNTSPKPARHVREQLSSETGLDMRVVQVWFQNRRAKEKRLK. The disordered stretch occupies residues 212–397; that stretch reads EKRLKKDAGR…WLDEVDHAQF (186 aa). The residue at position 227 (Tyr227) is a Phosphotyrosine. Phosphoserine is present on residues Ser234 and Ser238. Over residues 316–331 the composition is skewed to pro residues; sequence GVPPSPAAPQSLPGPQ.

In terms of assembly, interacts with POU1F1. At neuronal promoters, interacts with LDB1, in motor neurons LDB1 is displaced by ISL1 and a ternary complex is formed in which ISL1 contacts both LHX3 and LDB1; allosteric structural changes in the DNA binding domain of LHX3, induced by the ISL1-LHX3 interaction, may explain differences in sequence specificity of the different complexes. Interacts with LDB2. May interact with CITED2/MRG1.

It is found in the nucleus. Functionally, transcription factor. Recognizes and binds to the consensus sequence motif 5'-AATTAATTA-3' in the regulatory elements of target genes, such as glycoprotein hormones alpha chain CGA and visual system homeobox CHX10, positively modulating transcription; transcription can be co-activated by LDB2. Synergistically enhances transcription from the prolactin promoter in cooperation with POU1F1/Pit-1. Required for the establishment of the specialized cells of the pituitary gland and the nervous system. Involved in the development of interneurons and motor neurons in cooperation with LDB1 and ISL1. This Homo sapiens (Human) protein is LIM/homeobox protein Lhx3 (LHX3).